The following is a 213-amino-acid chain: UPF0056 membrane protein AF_2111 (213 aa).

6 consecutive transmembrane segments (helical) span residues 1–21, 51–71, 75–95, 118–138, 142–162, and 181–201; these read MDIA…FIII, IIAF…LDYF, ISSL…DILL, VFPL…GIVL, AGDV…YSIV, and ADIA…EFVF.

The protein belongs to the UPF0056 (MarC) family.

It is found in the cell membrane. The chain is UPF0056 membrane protein AF_2111 from Archaeoglobus fulgidus (strain ATCC 49558 / DSM 4304 / JCM 9628 / NBRC 100126 / VC-16).